Reading from the N-terminus, the 393-residue chain is MIQDPLVYLDISIDKKPIGRIVCKLFREKAPKTTENFYKLCAGDVKSPLKDQQYLSYKGNGFHRVVKNFMIQAGDIVFGTQKDSSSSSVGKGGCSIYADKEEVKTDDESFCYGNFEDENLGEFVEPFTLGMANLGSPNTNNSQFFITTYAAPHLNGKHSIFGQVVHGKSVVRTIENCRVDSDGVPESDVRISDCGVWEKTMGVPLYNASNDQIGGDVYEEYPDDDTHFGDDDFGKALEAANIIKESGTLLFKKKDYSNAFFKYRKSLNYINEYMPEPDVDKERNIQFINLKMKIYLNLSLVLFNLERYDDAIMYATYLLEMDNVPNRDQAKAYYRRGNSYLKKKRLDEALQDYIFCKEKNPDDEVIEQRIEYVNRLIEENKEKTRKNISKFFS.

The PPIase cyclophilin-type domain occupies Y8 to V196. TPR repeat units follow at residues A240–Y273, M292–P325, and A330–D363.

As to quaternary structure, interacts with RPD3 and CNS1.

It carries out the reaction [protein]-peptidylproline (omega=180) = [protein]-peptidylproline (omega=0). Its function is as follows. PPIases accelerate the folding of proteins. It catalyzes the cis-trans isomerization of proline imidic peptide bonds in oligopeptides. Plays a major role in negative regulation of the heat shock transcription factor (HSF). The sequence is that of Peptidyl-prolyl cis-trans isomerase CYP7 (CPR7) from Saccharomyces cerevisiae (strain ATCC 204508 / S288c) (Baker's yeast).